Here is a 329-residue protein sequence, read N- to C-terminus: Malate dehydrogenase (329 aa).

An NAD(+)-binding site is contributed by 12 to 18 (GAAGQIG). Residues R93 and R99 each coordinate substrate. NAD(+)-binding positions include N106, Q113, and 130 to 132 (VGN). Residues N132 and R163 each coordinate substrate. H188 acts as the Proton acceptor in catalysis.

The protein belongs to the LDH/MDH superfamily. MDH type 2 family.

The catalysed reaction is (S)-malate + NAD(+) = oxaloacetate + NADH + H(+). Catalyzes the reversible oxidation of malate to oxaloacetate. The protein is Malate dehydrogenase of Frankia casuarinae (strain DSM 45818 / CECT 9043 / HFP020203 / CcI3).